A 203-amino-acid polypeptide reads, in one-letter code: LexA repressor (203 aa).

A DNA-binding region (H-T-H motif) is located at residues 30–50; the sequence is VREICQAVSLKSTSTVHGHLK. Residues Ser127 and Lys164 each act as for autocatalytic cleavage activity in the active site.

The protein belongs to the peptidase S24 family. In terms of assembly, homodimer.

The catalysed reaction is Hydrolysis of Ala-|-Gly bond in repressor LexA.. Functionally, represses a number of genes involved in the response to DNA damage (SOS response), including recA and lexA. In the presence of single-stranded DNA, RecA interacts with LexA causing an autocatalytic cleavage which disrupts the DNA-binding part of LexA, leading to derepression of the SOS regulon and eventually DNA repair. The chain is LexA repressor from Clostridium perfringens (strain SM101 / Type A).